The chain runs to 353 residues: Fe(3+) ions import ATP-binding protein FbpC 1 (353 aa).

Residues 9–239 (VVFRNICKQF…PASAFIADFM (231 aa)) form the ABC transporter domain. An ATP-binding site is contributed by 41 to 48 (GPSGCGKT).

The protein belongs to the ABC transporter superfamily. Fe(3+) ion importer (TC 3.A.1.10) family. The complex is composed of two ATP-binding proteins (FbpC), two transmembrane proteins (FbpB) and a solute-binding protein (FbpA).

It is found in the cell inner membrane. The catalysed reaction is Fe(3+)(out) + ATP + H2O = Fe(3+)(in) + ADP + phosphate + H(+). Its function is as follows. Part of the ABC transporter complex FbpABC involved in Fe(3+) ions import. Responsible for energy coupling to the transport system. This chain is Fe(3+) ions import ATP-binding protein FbpC 1, found in Rhizobium meliloti (strain 1021) (Ensifer meliloti).